We begin with the raw amino-acid sequence, 310 residues long: Ribose-phosphate pyrophosphokinase (310 aa).

ATP-binding positions include 33 to 35 (DGE) and 92 to 93 (RQ). 2 residues coordinate Mg(2+): His127 and Asp166. The active site involves Lys189. D-ribose 5-phosphate contacts are provided by residues Arg191, Asp215, and 219–223 (DTAGT).

It belongs to the ribose-phosphate pyrophosphokinase family. Class I subfamily. As to quaternary structure, homohexamer. Requires Mg(2+) as cofactor.

The protein localises to the cytoplasm. The enzyme catalyses D-ribose 5-phosphate + ATP = 5-phospho-alpha-D-ribose 1-diphosphate + AMP + H(+). It functions in the pathway metabolic intermediate biosynthesis; 5-phospho-alpha-D-ribose 1-diphosphate biosynthesis; 5-phospho-alpha-D-ribose 1-diphosphate from D-ribose 5-phosphate (route I): step 1/1. Its function is as follows. Involved in the biosynthesis of the central metabolite phospho-alpha-D-ribosyl-1-pyrophosphate (PRPP) via the transfer of pyrophosphoryl group from ATP to 1-hydroxyl of ribose-5-phosphate (Rib-5-P). The polypeptide is Ribose-phosphate pyrophosphokinase (Bordetella pertussis (strain Tohama I / ATCC BAA-589 / NCTC 13251)).